A 101-amino-acid chain; its full sequence is Small ribosomal subunit protein uS14 (101 aa).

It belongs to the universal ribosomal protein uS14 family. Part of the 30S ribosomal subunit. Contacts proteins S3 and S10.

Binds 16S rRNA, required for the assembly of 30S particles and may also be responsible for determining the conformation of the 16S rRNA at the A site. This chain is Small ribosomal subunit protein uS14, found in Gluconacetobacter diazotrophicus (strain ATCC 49037 / DSM 5601 / CCUG 37298 / CIP 103539 / LMG 7603 / PAl5).